The sequence spans 193 residues: Pre-histone-like nucleoprotein (193 aa).

Ser2 is modified (N-acetylserine; by host). The propeptide occupies 2–24 (SIFISPSNNTGWGLRAPSKMYGG). An N6-acetyllysine; by host modification is found at Lys48. A Phosphothreonine; by host modification is found at Thr55. The short motif at 183–193 (RVPVRTRPPRT) is the Nuclear localization signal element.

The protein belongs to the adenoviridae histone-like nucleoprotein family. Interacts with the core-capsid bridging protein; this interaction bridges the virus core to the capsid. Interacts with host NPM1; this interaction might play a role in placing the pre-histone-like nucleoprotein on the viral DNA or regulating viral gene expression. Interacts with host HMGB1; this interaction inhibits host immune response. Cleaved near the N-terminus by the viral protease during virion maturation to form the mature protein.

The protein localises to the virion. The protein resides in the host nucleus. It localises to the host nucleolus. In terms of biological role, plays a role in the inhibition of host immune response within the nucleus. Interacts with cellular nucleosomes and immobilizes the host immune danger signal HMGB1 on chromatin. In turn, prevents HMGB1 release out of the cell and thus decreases inflammation. Also plays a role in the wrapping and condensation of the viral DNA. May also promote viral genome import into the nucleus. This chain is Pre-histone-like nucleoprotein, found in Homo sapiens (Human).